The primary structure comprises 541 residues: Membrane protein insertase YidC (541 aa).

Helical transmembrane passes span asparagine 6 to aspartate 26, leucine 325 to phenylalanine 345, phenylalanine 349 to phenylalanine 369, glycine 420 to leucine 440, leucine 457 to methionine 477, and valine 500 to glycine 520.

It belongs to the OXA1/ALB3/YidC family. Type 1 subfamily. As to quaternary structure, interacts with the Sec translocase complex via SecD. Specifically interacts with transmembrane segments of nascent integral membrane proteins during membrane integration.

The protein resides in the cell inner membrane. Required for the insertion and/or proper folding and/or complex formation of integral membrane proteins into the membrane. Involved in integration of membrane proteins that insert both dependently and independently of the Sec translocase complex, as well as at least some lipoproteins. Aids folding of multispanning membrane proteins. This chain is Membrane protein insertase YidC, found in Shewanella baltica (strain OS195).